The sequence spans 337 residues: Protein-glutamate methylesterase/protein-glutamine glutaminase of group 3 operon (337 aa).

The Response regulatory domain maps to Lys2–Leu119. Asp53 is modified (4-aspartylphosphate). The CheB-type methylesterase domain maps to Pro144–Lys337. Catalysis depends on residues Ser160, His187, and Asp280.

It belongs to the CheB family. Phosphorylated by CheA. Phosphorylation of the N-terminal regulatory domain activates the methylesterase activity.

The protein localises to the cytoplasm. The enzyme catalyses [protein]-L-glutamate 5-O-methyl ester + H2O = L-glutamyl-[protein] + methanol + H(+). The catalysed reaction is L-glutaminyl-[protein] + H2O = L-glutamyl-[protein] + NH4(+). Functionally, involved in chemotaxis. Part of a chemotaxis signal transduction system that modulates chemotaxis in response to various stimuli. Catalyzes the demethylation of specific methylglutamate residues introduced into the chemoreceptors (methyl-accepting chemotaxis proteins or MCP) by CheR. Also mediates the irreversible deamidation of specific glutamine residues to glutamic acid. The protein is Protein-glutamate methylesterase/protein-glutamine glutaminase of group 3 operon of Pseudomonas putida (strain ATCC 47054 / DSM 6125 / CFBP 8728 / NCIMB 11950 / KT2440).